We begin with the raw amino-acid sequence, 1067 residues long: Ubiquitin conjugation factor E4 A (1067 aa).

The tract at residues 33-57 is disordered; sequence KEQLKQQSDELPASPDDSDNSVSES. Lysine 386 is modified (N6-acetyllysine). The U-box domain maps to 987 to 1061; sequence DACDEFLDPI…QRWLAERKQQ (75 aa).

The protein belongs to the ubiquitin conjugation factor E4 family.

Its subcellular location is the cytoplasm. It carries out the reaction S-ubiquitinyl-[E2 ubiquitin-conjugating enzyme]-L-cysteine + [acceptor protein]-L-lysine = [E2 ubiquitin-conjugating enzyme]-L-cysteine + N(6)-ubiquitinyl-[acceptor protein]-L-lysine.. The protein operates within protein modification; protein ubiquitination. Its function is as follows. Ubiquitin-protein ligase that probably functions as an E3 ligase in conjunction with specific E1 and E2 ligases. May also function as an E4 ligase mediating the assembly of polyubiquitin chains on substrates ubiquitinated by another E3 ubiquitin ligase. Mediates 'Lys-48'-linked polyubiquitination of substrates. This is Ubiquitin conjugation factor E4 A from Bos taurus (Bovine).